We begin with the raw amino-acid sequence, 338 residues long: Ketol-acid reductoisomerase (NADP(+)) (338 aa).

A KARI N-terminal Rossmann domain is found at 1–181; sequence MKVSYDKDCD…GGGRTGIIET (181 aa). Residues 24–27, Arg47, Ser50, Ser52, and 82–85 each bind NADP(+); these read YGSQ and DEFQ. His107 is a catalytic residue. Gly133 is a binding site for NADP(+). Residues 182 to 327 enclose the KARI C-terminal knotted domain; that stretch reads TFKDETETDL…EKLRAMMPWI (146 aa). Positions 190, 194, 226, and 230 each coordinate Mg(2+). Residue Ser251 participates in substrate binding.

Belongs to the ketol-acid reductoisomerase family. Mg(2+) serves as cofactor.

The catalysed reaction is (2R)-2,3-dihydroxy-3-methylbutanoate + NADP(+) = (2S)-2-acetolactate + NADPH + H(+). It carries out the reaction (2R,3R)-2,3-dihydroxy-3-methylpentanoate + NADP(+) = (S)-2-ethyl-2-hydroxy-3-oxobutanoate + NADPH + H(+). The protein operates within amino-acid biosynthesis; L-isoleucine biosynthesis; L-isoleucine from 2-oxobutanoate: step 2/4. Its pathway is amino-acid biosynthesis; L-valine biosynthesis; L-valine from pyruvate: step 2/4. Its function is as follows. Involved in the biosynthesis of branched-chain amino acids (BCAA). Catalyzes an alkyl-migration followed by a ketol-acid reduction of (S)-2-acetolactate (S2AL) to yield (R)-2,3-dihydroxy-isovalerate. In the isomerase reaction, S2AL is rearranged via a Mg-dependent methyl migration to produce 3-hydroxy-3-methyl-2-ketobutyrate (HMKB). In the reductase reaction, this 2-ketoacid undergoes a metal-dependent reduction by NADPH to yield (R)-2,3-dihydroxy-isovalerate. This chain is Ketol-acid reductoisomerase (NADP(+)), found in Stutzerimonas stutzeri (strain A1501) (Pseudomonas stutzeri).